The following is a 93-amino-acid chain: Small ribosomal subunit protein uS19 (93 aa).

This sequence belongs to the universal ribosomal protein uS19 family.

Its function is as follows. Protein S19 forms a complex with S13 that binds strongly to the 16S ribosomal RNA. The polypeptide is Small ribosomal subunit protein uS19 (Desulfitobacterium hafniense (strain Y51)).